We begin with the raw amino-acid sequence, 422 residues long: Serine--tRNA ligase (422 aa).

Residue 227 to 229 (TSE) participates in L-serine binding. ATP-binding positions include 258–260 (RRE) and valine 274. Glutamate 281 contacts L-serine. An ATP-binding site is contributed by 345–348 (ELTS). Threonine 380 is a binding site for L-serine.

Belongs to the class-II aminoacyl-tRNA synthetase family. Type-1 seryl-tRNA synthetase subfamily. Homodimer. The tRNA molecule binds across the dimer.

It localises to the cytoplasm. The enzyme catalyses tRNA(Ser) + L-serine + ATP = L-seryl-tRNA(Ser) + AMP + diphosphate + H(+). The catalysed reaction is tRNA(Sec) + L-serine + ATP = L-seryl-tRNA(Sec) + AMP + diphosphate + H(+). It participates in aminoacyl-tRNA biosynthesis; selenocysteinyl-tRNA(Sec) biosynthesis; L-seryl-tRNA(Sec) from L-serine and tRNA(Sec): step 1/1. Its function is as follows. Catalyzes the attachment of serine to tRNA(Ser). Is also able to aminoacylate tRNA(Sec) with serine, to form the misacylated tRNA L-seryl-tRNA(Sec), which will be further converted into selenocysteinyl-tRNA(Sec). In Thermobifida fusca (strain YX), this protein is Serine--tRNA ligase.